The sequence spans 323 residues: Protein translocase subunit SecF (323 aa).

6 helical membrane passes run 19-39, 138-158, 162-182, 189-209, 244-264, and 269-289; these read GVIV…FKGF, ILSL…RYEW, LASV…VIVF, EVIA…IIIF, LTVF…IIGF, and LIGT…VALL.

It belongs to the SecD/SecF family. SecF subfamily. In terms of assembly, forms a complex with SecD. Part of the essential Sec protein translocation apparatus which comprises SecA, SecYEG and auxiliary proteins SecDF-YajC and YidC.

Its subcellular location is the cell inner membrane. Functionally, part of the Sec protein translocase complex. Interacts with the SecYEG preprotein conducting channel. SecDF uses the proton motive force (PMF) to complete protein translocation after the ATP-dependent function of SecA. This Helicobacter pylori (strain J99 / ATCC 700824) (Campylobacter pylori J99) protein is Protein translocase subunit SecF.